Reading from the N-terminus, the 284-residue chain is 4-hydroxybenzoate octaprenyltransferase (284 aa).

A run of 8 helical transmembrane segments spans residues 14-34 (VHQP…LWIT), 41-61 (FIVL…GCVI), 93-113 (WVFF…NNII), 134-154 (YIYL…LIVY), 166-186 (WLLF…YAMV), 209-229 (IVIG…GIVE), 233-253 (IIFY…QQVL), and 262-282 (CLWA…GIVL).

It belongs to the UbiA prenyltransferase family. The cofactor is Mg(2+).

It localises to the cell inner membrane. It catalyses the reaction all-trans-octaprenyl diphosphate + 4-hydroxybenzoate = 4-hydroxy-3-(all-trans-octaprenyl)benzoate + diphosphate. Its pathway is cofactor biosynthesis; ubiquinone biosynthesis. Catalyzes the prenylation of para-hydroxybenzoate (PHB) with an all-trans polyprenyl group. Mediates the second step in the final reaction sequence of ubiquinone-8 (UQ-8) biosynthesis, which is the condensation of the polyisoprenoid side chain with PHB, generating the first membrane-bound Q intermediate 3-octaprenyl-4-hydroxybenzoate. This chain is 4-hydroxybenzoate octaprenyltransferase, found in Blochmanniella floridana.